The chain runs to 211 residues: Germin-like protein subfamily 3 member 3 (211 aa).

Positions 1–20 (MKMIIQIFFIISLISTISFA) are cleaved as a signal peptide. Residues Cys26 and Cys41 are joined by a disulfide bond. Residues 55–201 (TGLGTAGNTS…TTFLSDAEVK (147 aa)) form the Cupin type-1 domain. N-linked (GlcNAc...) asparagine glycosylation occurs at Asn62. Mn(2+)-binding residues include His103, His105, and Glu110. Ser140 is modified (phosphoserine). His149 is a binding site for Mn(2+).

Belongs to the germin family. As to quaternary structure, oligomer (believed to be a pentamer but probably hexamer). In terms of tissue distribution, expressed in leaves and flowers.

The protein localises to the secreted. It is found in the extracellular space. Its subcellular location is the apoplast. In terms of biological role, may play a role in plant defense. Probably has no oxalate oxidase activity even if the active site is conserved. The chain is Germin-like protein subfamily 3 member 3 (GER3) from Arabidopsis thaliana (Mouse-ear cress).